Reading from the N-terminus, the 440-residue chain is Chitinase-like protein Idgf2 (440 aa).

The first 20 residues, 1-20, serve as a signal peptide directing secretion; the sequence is MKAWIWFTFVACLFAASTEA. A GH18 domain is found at 22 to 440; sequence SNLVCYYDSS…PILRAIKYRL (419 aa). A disulfide bridge links C26 with C53. An N-linked (GlcNAc...) asparagine glycan is attached at N220. An intrachain disulfide couples C342 to C425.

This sequence belongs to the glycosyl hydrolase 18 family. IDGF subfamily. Glycosylated. As to expression, primarily expressed in yolk cells and fat body. In larvae, it is expressed in the imaginal ring and weakly expressed in imaginal disks. More strongly expressed than Idgf1 and Idgf3.

The protein localises to the secreted. In terms of biological role, cooperates with insulin-like peptides to stimulate the proliferation, polarization and motility of imaginal disk cells. May act by stabilizing the binding of insulin-like peptides to its receptor through a simultaneous interaction with both molecules to form a multiprotein signaling complex. In Drosophila melanogaster (Fruit fly), this protein is Chitinase-like protein Idgf2 (Idgf2).